The sequence spans 321 residues: Acetyl-coenzyme A carboxylase carboxyl transferase subunit alpha (321 aa).

A CoA carboxyltransferase C-terminal domain is found at 39 to 293 (RLEVKSQALT…KRALAEALRQ (255 aa)).

This sequence belongs to the AccA family. Acetyl-CoA carboxylase is a heterohexamer composed of biotin carboxyl carrier protein (AccB), biotin carboxylase (AccC) and two subunits each of ACCase subunit alpha (AccA) and ACCase subunit beta (AccD).

The protein localises to the cytoplasm. It carries out the reaction N(6)-carboxybiotinyl-L-lysyl-[protein] + acetyl-CoA = N(6)-biotinyl-L-lysyl-[protein] + malonyl-CoA. It functions in the pathway lipid metabolism; malonyl-CoA biosynthesis; malonyl-CoA from acetyl-CoA: step 1/1. Functionally, component of the acetyl coenzyme A carboxylase (ACC) complex. First, biotin carboxylase catalyzes the carboxylation of biotin on its carrier protein (BCCP) and then the CO(2) group is transferred by the carboxyltransferase to acetyl-CoA to form malonyl-CoA. This chain is Acetyl-coenzyme A carboxylase carboxyl transferase subunit alpha, found in Azoarcus sp. (strain BH72).